The primary structure comprises 328 residues: Sterol-4-alpha-carboxylate 3-dehydrogenase, decarboxylating (328 aa).

The active-site Proton acceptor is Tyr-145. Residue Lys-149 participates in NAD(+) binding. A helical transmembrane segment spans residues 259-279 (LHMVLPTPIALSLVWIMALIW).

This sequence belongs to the 3-beta-HSD family. In terms of assembly, homodimer.

The protein resides in the endoplasmic reticulum membrane. It is found in the lipid droplet. The catalysed reaction is a 3beta-hydroxysteroid-4alpha-carboxylate + NADP(+) = a 3-oxosteroid + CO2 + NADPH. The enzyme catalyses a 3beta-hydroxysteroid-4alpha-carboxylate + NAD(+) = a 3-oxosteroid + CO2 + NADH. Its pathway is steroid biosynthesis; zymosterol biosynthesis; zymosterol from lanosterol: step 4/6. Catalyzes the NAD(P)(+)-dependent oxidative decarboxylation of the C4 methyl groups of 4-alpha-carboxysterols in post-squalene cholesterol biosynthesis. The polypeptide is Sterol-4-alpha-carboxylate 3-dehydrogenase, decarboxylating (nsdhl) (Dictyostelium discoideum (Social amoeba)).